We begin with the raw amino-acid sequence, 322 residues long: ATP-dependent 6-phosphofructokinase (322 aa).

ATP contacts are provided by residues glycine 12, 73-74, and 103-106; these read RF and GDGT. Aspartate 104 provides a ligand contact to Mg(2+). Residue 126–128 participates in substrate binding; the sequence is TID. Aspartate 128 (proton acceptor) is an active-site residue. Arginine 155 contacts ADP. Substrate is bound by residues arginine 163 and 170-172; that span reads MGR. ADP contacts are provided by residues 186-188, lysine 212, and 214-216; these read GSE and KPS. Substrate is bound by residues glutamate 223, arginine 245, and 251-254; that span reads HTQR.

This sequence belongs to the phosphofructokinase type A (PFKA) family. ATP-dependent PFK group I subfamily. Prokaryotic clade 'B1' sub-subfamily. In terms of assembly, homotetramer. Mg(2+) serves as cofactor.

The protein localises to the cytoplasm. The enzyme catalyses beta-D-fructose 6-phosphate + ATP = beta-D-fructose 1,6-bisphosphate + ADP + H(+). It functions in the pathway carbohydrate degradation; glycolysis; D-glyceraldehyde 3-phosphate and glycerone phosphate from D-glucose: step 3/4. With respect to regulation, allosterically activated by ADP and other diphosphonucleosides, and allosterically inhibited by phosphoenolpyruvate. In terms of biological role, catalyzes the phosphorylation of D-fructose 6-phosphate to fructose 1,6-bisphosphate by ATP, the first committing step of glycolysis. The sequence is that of ATP-dependent 6-phosphofructokinase from Mesomycoplasma hyopneumoniae (strain J / ATCC 25934 / NCTC 10110) (Mycoplasma hyopneumoniae).